We begin with the raw amino-acid sequence, 536 residues long: Testis-specific expressed protein 55 (536 aa).

Over residues 1 to 11 the composition is skewed to low complexity; sequence MEEPPQEALAE. Disordered stretches follow at residues 1-287 and 328-348; these read MEEP…PGTS and SNADQPPVDNAHYTESDQTDH. Positions 35–52 are enriched in basic and acidic residues; that stretch reads QKNQAERKADNHTAHRIA. 2 stretches are compositionally biased toward polar residues: residues 62–85 and 105–136; these read QAESSIFSQATNGVAEQNGHSTPG and QVNQTPSEQTKGKASSQANNVQHEQSDGQVSG. Composition is skewed to basic and acidic residues over residues 138–158 and 173–222; these read TEERTAEQTERRLPTQAERRT and RGSR…ERRP. Over residues 226–242 the composition is skewed to low complexity; the sequence is IDSGSSVPSDQSPSVQI. A compositionally biased stretch (polar residues) spans 243–255; sequence DSGSSVPSDQRPS. Over residues 339–348 the composition is skewed to basic and acidic residues; that stretch reads HYTESDQTDH.

As to expression, testis-specific.

It is found in the nucleus. Its subcellular location is the cell projection. The protein localises to the cilium. The protein resides in the flagellum. The sequence is that of Testis-specific expressed protein 55 from Homo sapiens (Human).